We begin with the raw amino-acid sequence, 118 residues long: Ribosome-binding factor A (118 aa).

This sequence belongs to the RbfA family. As to quaternary structure, monomer. Binds 30S ribosomal subunits, but not 50S ribosomal subunits or 70S ribosomes.

It localises to the cytoplasm. Its function is as follows. One of several proteins that assist in the late maturation steps of the functional core of the 30S ribosomal subunit. Associates with free 30S ribosomal subunits (but not with 30S subunits that are part of 70S ribosomes or polysomes). Required for efficient processing of 16S rRNA. May interact with the 5'-terminal helix region of 16S rRNA. This chain is Ribosome-binding factor A, found in Shouchella clausii (strain KSM-K16) (Alkalihalobacillus clausii).